The chain runs to 212 residues: N-(5'-phosphoribosyl)anthranilate isomerase (212 aa).

The protein belongs to the TrpF family.

It carries out the reaction N-(5-phospho-beta-D-ribosyl)anthranilate = 1-(2-carboxyphenylamino)-1-deoxy-D-ribulose 5-phosphate. It participates in amino-acid biosynthesis; L-tryptophan biosynthesis; L-tryptophan from chorismate: step 3/5. The chain is N-(5'-phosphoribosyl)anthranilate isomerase from Roseiflexus castenholzii (strain DSM 13941 / HLO8).